The primary structure comprises 144 residues: UPF0735 ACT domain-containing protein LSEI_1046 (144 aa).

One can recognise an ACT domain in the interval 68 to 143; sequence VISLMLHHDR…GVSDVHLVSV (76 aa).

The protein belongs to the UPF0735 family.

The chain is UPF0735 ACT domain-containing protein LSEI_1046 from Lacticaseibacillus paracasei (strain ATCC 334 / BCRC 17002 / CCUG 31169 / CIP 107868 / KCTC 3260 / NRRL B-441) (Lactobacillus paracasei).